The chain runs to 550 residues: CTP synthase (550 aa).

The amidoligase domain stretch occupies residues 1-267; it reads MKTKFIFITG…DQKIAIMLRL (267 aa). Serine 14 contributes to the CTP binding site. UTP is bound at residue serine 14. Residues 15 to 20 and aspartate 72 each bind ATP; that span reads SLGKGL. The Mg(2+) site is built by aspartate 72 and glutamate 141. Residues 148-150, 188-193, and lysine 224 each bind CTP; these read DIE and KTKPTQ. UTP contacts are provided by residues 188 to 193 and lysine 224; that span reads KTKPTQ. In terms of domain architecture, Glutamine amidotransferase type-1 spans 292-545; the sequence is TIGIVGKYVD…IKAAKKEAMG (254 aa). Glycine 354 provides a ligand contact to L-glutamine. Cysteine 381 functions as the Nucleophile; for glutamine hydrolysis in the catalytic mechanism. L-glutamine contacts are provided by residues 382–385, glutamate 405, and arginine 473; that span reads LGMQ. Catalysis depends on residues histidine 518 and glutamate 520.

This sequence belongs to the CTP synthase family. In terms of assembly, homotetramer.

It carries out the reaction UTP + L-glutamine + ATP + H2O = CTP + L-glutamate + ADP + phosphate + 2 H(+). It catalyses the reaction L-glutamine + H2O = L-glutamate + NH4(+). The enzyme catalyses UTP + NH4(+) + ATP = CTP + ADP + phosphate + 2 H(+). It functions in the pathway pyrimidine metabolism; CTP biosynthesis via de novo pathway; CTP from UDP: step 2/2. Its activity is regulated as follows. Allosterically activated by GTP, when glutamine is the substrate; GTP has no effect on the reaction when ammonia is the substrate. The allosteric effector GTP functions by stabilizing the protein conformation that binds the tetrahedral intermediate(s) formed during glutamine hydrolysis. Inhibited by the product CTP, via allosteric rather than competitive inhibition. Catalyzes the ATP-dependent amination of UTP to CTP with either L-glutamine or ammonia as the source of nitrogen. Regulates intracellular CTP levels through interactions with the four ribonucleotide triphosphates. The chain is CTP synthase from Nitratidesulfovibrio vulgaris (strain DSM 19637 / Miyazaki F) (Desulfovibrio vulgaris).